A 180-amino-acid polypeptide reads, in one-letter code: Crossover junction endodeoxyribonuclease RuvC (180 aa).

Residues aspartate 7, glutamate 66, and aspartate 138 contribute to the active site. The Mg(2+) site is built by aspartate 7, glutamate 66, and aspartate 138.

This sequence belongs to the RuvC family. Homodimer which binds Holliday junction (HJ) DNA. The HJ becomes 2-fold symmetrical on binding to RuvC with unstacked arms; it has a different conformation from HJ DNA in complex with RuvA. In the full resolvosome a probable DNA-RuvA(4)-RuvB(12)-RuvC(2) complex forms which resolves the HJ. The cofactor is Mg(2+).

It is found in the cytoplasm. The enzyme catalyses Endonucleolytic cleavage at a junction such as a reciprocal single-stranded crossover between two homologous DNA duplexes (Holliday junction).. The RuvA-RuvB-RuvC complex processes Holliday junction (HJ) DNA during genetic recombination and DNA repair. Endonuclease that resolves HJ intermediates. Cleaves cruciform DNA by making single-stranded nicks across the HJ at symmetrical positions within the homologous arms, yielding a 5'-phosphate and a 3'-hydroxyl group; requires a central core of homology in the junction. The consensus cleavage sequence is 5'-(A/T)TT(C/G)-3'. Cleavage occurs on the 3'-side of the TT dinucleotide at the point of strand exchange. HJ branch migration catalyzed by RuvA-RuvB allows RuvC to scan DNA until it finds its consensus sequence, where it cleaves and resolves the cruciform DNA. This chain is Crossover junction endodeoxyribonuclease RuvC, found in Paraburkholderia phymatum (strain DSM 17167 / CIP 108236 / LMG 21445 / STM815) (Burkholderia phymatum).